A 257-amino-acid polypeptide reads, in one-letter code: MLSKRIIPCLDVKDGVVVKGVQFRNHEVMGGIVELARRYASEGADELVFYDITASSDERVVDKSWVSRVAEVIDIPFCVAGGIKSVEDARQILEFGADKVSINSPALADPTLITRLAERFGVQCVVVGIDSYFDAQSGHYQVKQFTGDESRTRTTAWHTLDWVEEAQKRGAGEIVLNVMNQDGMRQGYDLEQLKLVRAVCKVPLIASGGAGAMEHFRDAFTLADVDGALAASVFHKGLIPIPELKRWLKTEGVAIRE.

Residues aspartate 11 and aspartate 130 contribute to the active site.

The protein belongs to the HisA/HisF family. Heterodimer of HisH and HisF.

It is found in the cytoplasm. It carries out the reaction 5-[(5-phospho-1-deoxy-D-ribulos-1-ylimino)methylamino]-1-(5-phospho-beta-D-ribosyl)imidazole-4-carboxamide + L-glutamine = D-erythro-1-(imidazol-4-yl)glycerol 3-phosphate + 5-amino-1-(5-phospho-beta-D-ribosyl)imidazole-4-carboxamide + L-glutamate + H(+). It functions in the pathway amino-acid biosynthesis; L-histidine biosynthesis; L-histidine from 5-phospho-alpha-D-ribose 1-diphosphate: step 5/9. Its function is as follows. IGPS catalyzes the conversion of PRFAR and glutamine to IGP, AICAR and glutamate. The HisF subunit catalyzes the cyclization activity that produces IGP and AICAR from PRFAR using the ammonia provided by the HisH subunit. The polypeptide is Imidazole glycerol phosphate synthase subunit HisF (Aeromonas hydrophila subsp. hydrophila (strain ATCC 7966 / DSM 30187 / BCRC 13018 / CCUG 14551 / JCM 1027 / KCTC 2358 / NCIMB 9240 / NCTC 8049)).